Consider the following 67-residue polypeptide: Conotoxin Pu5.1 (67 aa).

Positions 1 to 22 are cleaved as a signal peptide; the sequence is MRCVPVFVILLLLIASTPSVDA. The propeptide occupies 23–51; the sequence is RPNPKDDVPLASFHEDANGILQMLWKKGR. W63 bears the Tryptophan amide mark.

This sequence belongs to the conotoxin T superfamily. Post-translationally, contains 2 disulfide bonds that can be either 'C1-C3, C2-C4' or 'C1-C4, C2-C3', since these disulfide connectivities have been observed for conotoxins with cysteine framework V (for examples, see AC P0DQQ7 and AC P81755). In terms of tissue distribution, expressed by the venom duct.

The protein resides in the secreted. The protein is Conotoxin Pu5.1 of Conus pulicarius (Flea-bitten cone).